A 386-amino-acid chain; its full sequence is Leupaxin (386 aa).

M1 bears the N-acetylmethionine mark. The short motif at E3–T15 is the LD motif 1 element. The disordered stretch occupies residues R13–D41. S19 is modified (phosphoserine). Y22 carries the phosphotyrosine modification. S54 carries the post-translational modification Phosphoserine. Position 62 is a phosphotyrosine (Y62). 2 short sequence motifs (LD motif) span residues N70 to P82 and Q92 to M103. Residue Y72 is modified to Phosphotyrosine; by LYN. S81 carries the post-translational modification Phosphoserine. 4 LIM zinc-binding domains span residues G150 to S208, P209 to S267, P268 to G326, and T327 to L386.

The protein belongs to the paxillin family. As to quaternary structure, interacts with PTPN22. Interacts with unphosphorylated ITGA4. Interacts with PTK2B/PYK2, PTPN12, AR and SRF. Interacts (via LD motif 3) with LYN and the interaction is induced upon B-cell antigen receptor (BCR) activation. Interacts (via LD motif 3) with PTK2/FAK. Post-translationally, phosphorylated on tyrosine residues. Phosphorylation on Tyr-72 is important for its inhibitory function. Bombesin stimulates phosphorylation on Tyr-22, Tyr-62 and Tyr-72. Macrophages, monocytes and osteoclasts (at protein level). Strongly expressed in cells and tissues of hematopoietic origin. Highest expression in lymphoid tissues such as spleen, lymph node, thymus and appendix and in the vascular smooth muscle. Lower levels in bone marrow and fetal liver. Also expressed in peripheral blood lymphocytes and a number of hematopoietic cell lines. Very low levels found in epithelial cell lines. Expressed in prostate cancer (PCa) cells and its expression intensity is directly linked to PCa progression.

It is found in the cytoplasm. The protein resides in the cell junction. Its subcellular location is the focal adhesion. The protein localises to the nucleus. It localises to the perinuclear region. It is found in the cell projection. The protein resides in the podosome. Its subcellular location is the cell membrane. Functionally, transcriptional coactivator for androgen receptor (AR) and serum response factor (SRF). Contributes to the regulation of cell adhesion, spreading and cell migration and acts as a negative regulator in integrin-mediated cell adhesion events. Suppresses the integrin-induced tyrosine phosphorylation of paxillin (PXN). May play a critical role as an adapter protein in the formation of the adhesion zone in osteoclasts. Negatively regulates B-cell antigen receptor (BCR) signaling. The sequence is that of Leupaxin (LPXN) from Homo sapiens (Human).